Here is a 426-residue protein sequence, read N- to C-terminus: Serine--tRNA ligase (426 aa).

L-serine is bound at residue 233 to 235; it reads TSE. ATP is bound at residue 264–266; that stretch reads RSE. L-serine is bound at residue Glu-287. 351–354 is an ATP binding site; it reads EISS. Ser-387 is a binding site for L-serine.

It belongs to the class-II aminoacyl-tRNA synthetase family. Type-1 seryl-tRNA synthetase subfamily. In terms of assembly, homodimer. The tRNA molecule binds across the dimer.

The protein localises to the cytoplasm. The catalysed reaction is tRNA(Ser) + L-serine + ATP = L-seryl-tRNA(Ser) + AMP + diphosphate + H(+). The enzyme catalyses tRNA(Sec) + L-serine + ATP = L-seryl-tRNA(Sec) + AMP + diphosphate + H(+). The protein operates within aminoacyl-tRNA biosynthesis; selenocysteinyl-tRNA(Sec) biosynthesis; L-seryl-tRNA(Sec) from L-serine and tRNA(Sec): step 1/1. Functionally, catalyzes the attachment of serine to tRNA(Ser). Is also able to aminoacylate tRNA(Sec) with serine, to form the misacylated tRNA L-seryl-tRNA(Sec), which will be further converted into selenocysteinyl-tRNA(Sec). In Colwellia psychrerythraea (strain 34H / ATCC BAA-681) (Vibrio psychroerythus), this protein is Serine--tRNA ligase.